The sequence spans 491 residues: Lysine--tRNA ligase 1 (491 aa).

Mg(2+) is bound by residues Glu400 and Glu407.

This sequence belongs to the class-II aminoacyl-tRNA synthetase family. Homodimer. Mg(2+) is required as a cofactor.

It is found in the cytoplasm. It carries out the reaction tRNA(Lys) + L-lysine + ATP = L-lysyl-tRNA(Lys) + AMP + diphosphate. The protein is Lysine--tRNA ligase 1 of Mycoplasmopsis pulmonis (strain UAB CTIP) (Mycoplasma pulmonis).